Reading from the N-terminus, the 414-residue chain is Tar DNA-binding protein homolog 1 (414 aa).

Composition is skewed to basic and acidic residues over residues 1–44 (MADE…KTTD) and 153–167 (DDGR…RAVE). Disordered stretches follow at residues 1 to 58 (MADE…GDEP) and 132 to 167 (SSAD…RAVE). 2 consecutive RRM domains span residues 173–259 (VDLI…QGRP) and 262–341 (SRIF…IAQP). The tract at residues 343 to 414 (EENNQSVGPD…APGDSRGPGW (72 aa)) is disordered. A compositionally biased stretch (basic and acidic residues) spans 361–373 (NRRERDRPDRRPI).

In terms of assembly, interacts with chromobox protein homolog hpl-2; interaction may maintain localization of hpl-2 to gene bodies. In terms of tissue distribution, widely expressed in a range of tissues including body wall muscles, pharynx and neurons of the midbody in adults and larvae.

It localises to the nucleus. Its subcellular location is the cytoplasm. In terms of biological role, RNA-binding protein which regulates transcription, splicing and RNA-editing. Limits the accumulation of double-stranded RNA by maintaining the abundance of the mature RNA transcripts that are formed from double-stranded precursor RNAs. Stress response protein that acts downstream of daf-16 in the insulin/IGF pathway to regulate longevity and the cellular stress response to osmotic, oxidative, proteotoxic and endoplasmic reticulum stress. Involved in the regulation of physiological processes including aging, fertility, growth and locomotion. Plays a role in maintaining localization of chromobox protein homolog hpl-2 to gene bodies, perhaps acting via binding to nascent RNA transcripts. This chain is Tar DNA-binding protein homolog 1, found in Caenorhabditis elegans.